The chain runs to 804 residues: Leucine--tRNA ligase (804 aa).

Residues 40–51 carry the 'HIGH' region motif; sequence PYPSGAGLHVGH. The 'KMSKS' region motif lies at 576 to 580; that stretch reads KMSKS. ATP is bound at residue Lys-579.

This sequence belongs to the class-I aminoacyl-tRNA synthetase family.

The protein localises to the cytoplasm. It carries out the reaction tRNA(Leu) + L-leucine + ATP = L-leucyl-tRNA(Leu) + AMP + diphosphate. The chain is Leucine--tRNA ligase from Staphylococcus aureus (strain MRSA252).